The primary structure comprises 81 residues: UPF0180 protein YkuS (81 aa).

This sequence belongs to the UPF0180 family.

This chain is UPF0180 protein YkuS (ykuS), found in Bacillus subtilis (strain 168).